The chain runs to 377 residues: Testis-expressed protein 13A (377 aa).

Residues 92–377 (WLQDLSSLHK…CGKGIWLQNP (286 aa)) form a required for repression of transcription region. The stretch at 122–156 (QKEVALQLQMAQAKLEEVQRERDLLRLKILQAELR) forms a coiled coil. An LRR repeat occupies 142-165 (ERDLLRLKILQAELRALPNAVRPA). The segment at 345 to 369 (RPGDWDCPWCKAVNFSRRENCFHCG) adopts a RanBP2-type zinc-finger fold. Zn(2+) contacts are provided by Cys-351, Cys-354, Cys-365, and Cys-368.

The protein belongs to the TEX13 family. In terms of assembly, interacts with CNOT1; the interaction may inhibit CNOT1 binding to mRNA and subsequently CNOT1-mediated mRNA degradation.

Its function is as follows. Binds to ssRNA containing the consensus sequence 5'-AGGUAA-3'. Plays a role in transcriptional repression. Required for rapid sperm motility and timely degradation of mRNA via its interaction with CNOT1. This is Testis-expressed protein 13A from Mus musculus (Mouse).